Here is a 321-residue protein sequence, read N- to C-terminus: p-hydroxybenzoic acid efflux pump subunit AaeA (321 aa).

Residues 22–42 (VVITLVIVLCAIVAIFRVWAF) traverse the membrane as a helical segment.

This sequence belongs to the membrane fusion protein (MFP) (TC 8.A.1) family.

It is found in the cell inner membrane. Forms an efflux pump with AaeB. This Pectobacterium atrosepticum (strain SCRI 1043 / ATCC BAA-672) (Erwinia carotovora subsp. atroseptica) protein is p-hydroxybenzoic acid efflux pump subunit AaeA.